We begin with the raw amino-acid sequence, 790 residues long: Nuclear cap-binding protein subunit 1 (790 aa).

A disordered region spans residues 1–26; that stretch reads MSRRRHSDENDGGQPHKRRKTSDANE. Residues 3–20 carry the Nuclear localization signal motif; it reads RRRHSDENDGGQPHKRRK. S7 is modified (phosphoserine; by RPS6KB1). T21 bears the Phosphothreonine; by RPS6KB1 mark. S22 carries the post-translational modification Phosphoserine; by RPS6KB1. The region spanning 28 to 240 is the MIF4G domain; that stretch reads EDHLESLICK…CLWAQIQKLK (213 aa). A Phosphoserine modification is found at S201. K204 carries the N6-acetyllysine modification. The stretch at 643 to 713 forms a coiled coil; sequence STIRKMNKHV…SEQKNLFLVI (71 aa). A Glycyl lysine isopeptide (Lys-Gly) (interchain with G-Cter in SUMO2) cross-link involves residue K684. Residue K698 is modified to N6-acetyllysine.

Belongs to the NCBP1 family. In terms of assembly, component of the nuclear cap-binding complex (CBC), a heterodimer composed of NCBP1/CBP80 and NCBP2/CBP20 that interacts with m7GpppG-capped RNA. Found in a U snRNA export complex containing PHAX/RNUXA, NCBP1/CBP80, NCBP2/CBP20, RAN, XPO1 and m7G-capped RNA. Identified in a IGF2BP1-dependent mRNP granule complex containing untranslated mRNAs. Interacts with PHAX/RNUXA, SRRT/ARS2, EIF4G2, IGF2BP1, HNRNPF, HNRNPH1, KIAA0427/CTIF, PARN, DROSHA, UPF1 and ALYREF/THOC4. May interact with EIF4G1; the interaction is however controversial since it is reported by PubMed:11340157, PubMed:15059963 and PubMed:15361857, but is not observed by PubMed:19648179. The large PER complex involved in the repression of transcriptional termination is composed of at least PER2, CDK9, DDX5, DHX9, NCBP1/CBP80 and POLR2A. Component of an alternative nuclear cap-binding complex (CBC) composed of NCBP1/CBP80 and NCBP3. Interacts with METTL3. Interacts with ZFC3H1 in a RNase-insensitive manner. Interacts with MTREX. Interacts with TASOR. Interacts with DHX34; the interaction is RNA-dependent. Interacts with KPNA3. Post-translationally, dephosphorylated at Thr-21 by the PNUTS-PP1 complex during RNA polymerase II transcription pause-release.

The protein resides in the nucleus. Its subcellular location is the cytoplasm. Functionally, component of the cap-binding complex (CBC), which binds cotranscriptionally to the 5'-cap of pre-mRNAs and is involved in various processes such as pre-mRNA splicing, translation regulation, nonsense-mediated mRNA decay, RNA-mediated gene silencing (RNAi) by microRNAs (miRNAs) and mRNA export. The CBC complex is involved in mRNA export from the nucleus via its interaction with ALYREF/THOC4/ALY, leading to the recruitment of the mRNA export machinery to the 5'-end of mRNA and to mRNA export in a 5' to 3' direction through the nuclear pore. The CBC complex is also involved in mediating U snRNA and intronless mRNAs export from the nucleus. The CBC complex is essential for a pioneer round of mRNA translation, before steady state translation when the CBC complex is replaced by cytoplasmic cap-binding protein eIF4E. The pioneer round of mRNA translation mediated by the CBC complex plays a central role in nonsense-mediated mRNA decay (NMD), NMD only taking place in mRNAs bound to the CBC complex, but not on eIF4E-bound mRNAs. The CBC complex enhances NMD in mRNAs containing at least one exon-junction complex (EJC) via its interaction with UPF1, promoting the interaction between UPF1 and UPF2. The CBC complex is also involved in 'failsafe' NMD, which is independent of the EJC complex, while it does not participate in Staufen-mediated mRNA decay (SMD). During cell proliferation, the CBC complex is also involved in microRNAs (miRNAs) biogenesis via its interaction with SRRT/ARS2 and is required for miRNA-mediated RNA interference. The CBC complex also acts as a negative regulator of PARN, thereby acting as an inhibitor of mRNA deadenylation. In the CBC complex, NCBP1/CBP80 does not bind directly capped RNAs (m7GpppG-capped RNA) but is required to stabilize the movement of the N-terminal loop of NCBP2/CBP20 and lock the CBC into a high affinity cap-binding state with the cap structure. Associates with NCBP3 to form an alternative cap-binding complex (CBC) which plays a key role in mRNA export and is particularly important in cellular stress situations such as virus infections. The conventional CBC with NCBP2 binds both small nuclear RNA (snRNA) and messenger (mRNA) and is involved in their export from the nucleus whereas the alternative CBC with NCBP3 does not bind snRNA and associates only with mRNA thereby playing a role only in mRNA export. NCBP1/CBP80 is required for cell growth and viability. The chain is Nuclear cap-binding protein subunit 1 (NCBP1) from Homo sapiens (Human).